The following is a 108-amino-acid chain: Monothiol bacilliredoxin BrxC (108 aa).

Residue C31 is modified to S-bacillithiol cysteine disulfide.

Interacts with AbrB, BdhA, Bdr, BrxB, FolD, GapA, GapB, GatA, PfkA, PyrAA, PyrAB, PyrE, PyrG, PyrH, RpsB, RpsK, RpsL, SalA, SucC, Tuf and YtsJ. Post-translationally, cys can react with bacillithiol (BSH) to form mixed disulfides. S-bacillithiolation protects Cys residues against overoxidation by acting as a redox switch in response to oxidative stress.

Its function is as follows. S-bacillithiolation is the formation of mixed disulfide bonds between protein thiols and the general thiol reductant bacillithiol (BSH) under oxidative stress. BSH is an equivalent of glutathione (GSH) in Firmicutes. This protein is a monothiol bacilliredoxin, which debacillithiolates (removes BSH) the S-bacillithiolated glyceraldehyde-3-phosphate dehydrogenases (GAPDHs) GapA and GapB in vivo and probably a number of other oxidized cytosolic proteins. Debacillithiolates the S-bacillithiolated Bdr (Bdr-SSB) and BrxB (BrxB-SSB) in vitro. Involved in maintaining redox homeostasis in response to disulfide stress conditions. The polypeptide is Monothiol bacilliredoxin BrxC (Bacillus subtilis (strain 168)).